The sequence spans 257 residues: Phosphonates import ATP-binding protein PhnC (257 aa).

In terms of domain architecture, ABC transporter spans I2–A246. G35 to S42 provides a ligand contact to ATP.

The protein belongs to the ABC transporter superfamily. Phosphonates importer (TC 3.A.1.9.1) family. In terms of assembly, the complex is composed of two ATP-binding proteins (PhnC), two transmembrane proteins (PhnE) and a solute-binding protein (PhnD).

It is found in the cell membrane. It catalyses the reaction phosphonate(out) + ATP + H2O = phosphonate(in) + ADP + phosphate + H(+). In terms of biological role, part of the ABC transporter complex PhnCDE involved in phosphonates import. Responsible for energy coupling to the transport system. The protein is Phosphonates import ATP-binding protein PhnC of Bacillus thuringiensis subsp. konkukian (strain 97-27).